Here is a 233-residue protein sequence, read N- to C-terminus: Large ribosomal subunit protein uL1 (233 aa).

It belongs to the universal ribosomal protein uL1 family. Part of the 50S ribosomal subunit.

Binds directly to 23S rRNA. The L1 stalk is quite mobile in the ribosome, and is involved in E site tRNA release. Functionally, protein L1 is also a translational repressor protein, it controls the translation of the L11 operon by binding to its mRNA. The sequence is that of Large ribosomal subunit protein uL1 from Psychrobacter cryohalolentis (strain ATCC BAA-1226 / DSM 17306 / VKM B-2378 / K5).